A 392-amino-acid polypeptide reads, in one-letter code: Sterol methyltransferase-like 3 (392 aa).

Residues 20-42 (VTPWQAAAGVTAAIFIGSYLWHS) traverse the membrane as a helical segment.

Belongs to the class I-like SAM-binding methyltransferase superfamily. Erg6/SMT family.

Its subcellular location is the microsome membrane. In terms of biological role, unable to convert squalene, botryococcene, cycloartenol, zymosterol or lanosterol to mono-, di-, tri- or tetramethylated derivatives. This Botryococcus braunii (Green alga) protein is Sterol methyltransferase-like 3 (SMT-3).